A 183-amino-acid chain; its full sequence is Inner membrane protein p54 (183 aa).

The helical transmembrane segment at 32-52 (YTILIAIVVLVIIIIVLIYLF) threads the bilayer. The disordered stretch occupies residues 81–157 (EVTPQPGTSK…PYTTVTTQNT (77 aa)). Over residues 111 to 122 (RPATNKPVTDNP) the composition is skewed to polar residues. Over residues 130-143 (ATGGPAAAPAAASA) the composition is skewed to low complexity. The interaction with host DYNLL1 stretch occupies residues 149–161 (YTTVTTQNTASQT).

Belongs to the asfivirus envelope protein p54 family. In terms of assembly, interacts with the host light chain cytoplasmic dynein DYNLL1; this interaction is critical for intracellular microtubule-dependent virus transport toward viral factories.

It localises to the virion membrane. Its subcellular location is the host cytoplasm. It is found in the host cytoskeleton. The protein resides in the host endoplasmic reticulum membrane. Its function is as follows. Inner envelope protein involved, through its interaction with host dynein, in the intracellular microtubule-dependent transport of viral capsid toward viral factories. Seems to induce caspase-3 activation and apoptosis. Plays a role in virion morphogenesis by recruiting and transforming the host ER membranes into the precursors of the viral envelope. Involved in virus attachment to the host cell. The sequence is that of Inner membrane protein p54 from African swine fever virus (strain Badajoz 1971 Vero-adapted) (Ba71V).